Reading from the N-terminus, the 91-residue chain is Small ribosomal subunit protein uS19 (91 aa).

The protein belongs to the universal ribosomal protein uS19 family.

In terms of biological role, protein S19 forms a complex with S13 that binds strongly to the 16S ribosomal RNA. This Cupriavidus necator (strain ATCC 17699 / DSM 428 / KCTC 22496 / NCIMB 10442 / H16 / Stanier 337) (Ralstonia eutropha) protein is Small ribosomal subunit protein uS19.